Reading from the N-terminus, the 136-residue chain is FK506-binding protein 2 (136 aa).

The N-terminal stretch at 1-17 is a signal peptide; sequence MLSQIWILFTFMVCVIA. The PPIase FKBP-type domain maps to 45–134; sequence GDMVSVHYTG…DFDVELVDIA (90 aa).

This sequence belongs to the FKBP-type PPIase family. FKBP2 subfamily.

It localises to the endoplasmic reticulum. The enzyme catalyses [protein]-peptidylproline (omega=180) = [protein]-peptidylproline (omega=0). Inhibited by both FK506 and rapamycin. In terms of biological role, PPIases accelerate the folding of proteins. It catalyzes the cis-trans isomerization of proline imidic peptide bonds in oligopeptides. The protein is FK506-binding protein 2 (FPR2) of Candida glabrata (strain ATCC 2001 / BCRC 20586 / JCM 3761 / NBRC 0622 / NRRL Y-65 / CBS 138) (Yeast).